The following is a 76-amino-acid chain: Sec-independent protein translocase protein TatA (76 aa).

The chain crosses the membrane as a helical span at residues 1 to 21; sequence MGGISIWQLLIIVAIIVLLFG. The segment at 43–76 is disordered; sequence MADDKSQPQDASFEKVEAKEAASTEQKAKEKEQA.

It belongs to the TatA/E family. As to quaternary structure, the Tat system comprises two distinct complexes: a TatABC complex, containing multiple copies of TatA, TatB and TatC subunits, and a separate TatA complex, containing only TatA subunits. Substrates initially bind to the TatABC complex, which probably triggers association of the separate TatA complex to form the active translocon.

It is found in the cell inner membrane. Functionally, part of the twin-arginine translocation (Tat) system that transports large folded proteins containing a characteristic twin-arginine motif in their signal peptide across membranes. TatA could form the protein-conducting channel of the Tat system. In Actinobacillus pleuropneumoniae serotype 5b (strain L20), this protein is Sec-independent protein translocase protein TatA.